Here is a 326-residue protein sequence, read N- to C-terminus: Neuferricin homolog (326 aa).

Residues 1 to 34 form the signal peptide; sequence MDKNRRRTDDAGLMTKTLAGIAALVFFLSFICSS. In terms of domain architecture, Cytochrome b5 heme-binding spans 98–197; sequence KHVFTPEQLH…KEYPLVGVVA (100 aa).

The protein belongs to the cytochrome b5 family. MAPR subfamily.

The protein resides in the secreted. Functionally, heme-binding protein. The sequence is that of Neuferricin homolog (tag-131) from Caenorhabditis elegans.